A 75-amino-acid polypeptide reads, in one-letter code: Lipid-anchored plasma membrane protein CPP2 (75 aa).

The tract at residues M1–V43 is disordered. 3 consecutive repeat copies span residues Q4–P13, Q14–P23, and Q24–P33. A 3 X 10 AA tandem repeats of Q-Q-G-Y-Y-Q-Q-G-P-P region spans residues Q4 to P33.

It belongs to the CYSTM1 family. In terms of processing, palmitoylated near the C-terminus.

The protein localises to the cell membrane. The polypeptide is Lipid-anchored plasma membrane protein CPP2 (Saccharomyces cerevisiae (strain ATCC 204508 / S288c) (Baker's yeast)).